A 492-amino-acid polypeptide reads, in one-letter code: Putative sucrose transport protein SUC6 (492 aa).

The disordered stretch occupies residues 1 to 26; that stretch reads MSDLQANKDAAAVNRQSSSSSADLNG. Over 1 to 33 the chain is Cytoplasmic; sequence MSDLQANKDAAAVNRQSSSSSADLNGPSPMRKM. The segment covering 14-23 has biased composition (polar residues); it reads NRQSSSSSAD. S17 is modified (phosphoserine). A helical membrane pass occupies residues 34-54; the sequence is ISVASIAAGIQFGWALQLSLL. At 55–68 the chain is on the extracellular side; it reads TPYVQLLGVPHKWS. Residues 69–89 traverse the membrane as a helical segment; the sequence is SFIWLCGPVSGLLVQPSVGYF. Residues 90–101 are Cytoplasmic-facing; the sequence is SDRCKSRFGRRR. The chain crosses the membrane as a helical span at residues 102–122; sequence PFIAMGALLVAVAVVLIGYAA. Topologically, residues 123 to 139 are extracellular; that stretch reads DFGHSMGDKVDEPVKMR. The chain crosses the membrane as a helical span at residues 140-160; that stretch reads AVVIFALGFWILDVANNTLQG. Topologically, residues 161-181 are cytoplasmic; the sequence is PCRAFLGDLAAGDAKKTRTAN. The chain crosses the membrane as a helical span at residues 182–202; sequence AFFSFFMAVGNVLGYAAGSYT. At 203 to 224 the chain is on the extracellular side; that stretch reads NLYKIFPFTMTKACDIYCANLK. Residues 225 to 245 traverse the membrane as a helical segment; it reads SCFFLSITLLLVVTIIALWYV. Residues 246 to 277 are Cytoplasmic-facing; sequence EDKQWSPKADSDNEKTPFFGEIFGAFKVMKRP. Residues 278–298 form a helical membrane-spanning segment; that stretch reads MWMLLIVTALNWIAWFPFLLY. Residues 299-324 are Extracellular-facing; the sequence is DTDWMGREVYGGDSKGDDKMKKLYNQ. Residues 325–345 form a helical membrane-spanning segment; it reads GIHVGGLGLMLNSIVLGFMSL. Residues 346-359 are Cytoplasmic-facing; the sequence is GIEGISRKMGGAKR. Residues 360–380 form a helical membrane-spanning segment; that stretch reads LWGAVNIILAVCLAMTVLVTK. Residues 381 to 403 lie on the Extracellular side of the membrane; the sequence is KAEEHRRIAGPMALPTDGIRAGA. The chain crosses the membrane as a helical span at residues 404–424; it reads LTLFALLGIPLAITFSIPFAL. At 425 to 446 the chain is on the cytoplasmic side; that stretch reads ASIISSSSGAGQGLSLGVLNMT. Residues 447–467 form a helical membrane-spanning segment; it reads IVIPQMVVSFGVGPIDALFGG. Topologically, residues 468–469 are extracellular; the sequence is GN. A helical transmembrane segment spans residues 470-490; the sequence is LPGFVVGAIAAAISSVVAFSV. Over 491–492 the chain is Cytoplasmic; sequence LP.

It belongs to the glycoside-pentoside-hexuronide (GPH) cation symporter transporter (TC 2.A.2.4) family.

It localises to the cell membrane. The protein operates within glycan biosynthesis; sucrose metabolism. In terms of biological role, may be responsible for the transport of glucosides into the cell, with the concomitant uptake of protons (symport system). Does not seem to transport sucrose. The protein is Putative sucrose transport protein SUC6 of Arabidopsis thaliana (Mouse-ear cress).